A 117-amino-acid chain; its full sequence is Large ribosomal subunit protein bL20c (117 aa).

Belongs to the bacterial ribosomal protein bL20 family.

The protein localises to the plastid. It is found in the chloroplast. Functionally, binds directly to 23S ribosomal RNA and is necessary for the in vitro assembly process of the 50S ribosomal subunit. It is not involved in the protein synthesizing functions of that subunit. The protein is Large ribosomal subunit protein bL20c of Thalassiosira pseudonana (Marine diatom).